Reading from the N-terminus, the 341-residue chain is tRNA N6-adenosine threonylcarbamoyltransferase (341 aa).

Fe cation contacts are provided by H114 and H118. Substrate-binding positions include 136-140 (LVSGG), D169, G182, D186, and N278. D304 contacts Fe cation.

It belongs to the KAE1 / TsaD family. Requires Fe(2+) as cofactor.

It is found in the cytoplasm. The catalysed reaction is L-threonylcarbamoyladenylate + adenosine(37) in tRNA = N(6)-L-threonylcarbamoyladenosine(37) in tRNA + AMP + H(+). In terms of biological role, required for the formation of a threonylcarbamoyl group on adenosine at position 37 (t(6)A37) in tRNAs that read codons beginning with adenine. Is involved in the transfer of the threonylcarbamoyl moiety of threonylcarbamoyl-AMP (TC-AMP) to the N6 group of A37, together with TsaE and TsaB. TsaD likely plays a direct catalytic role in this reaction. The chain is tRNA N6-adenosine threonylcarbamoyltransferase from Lactococcus lactis subsp. cremoris (strain MG1363).